Here is a 292-residue protein sequence, read N- to C-terminus: Succinate dehydrogenase assembly factor 2, mitochondrial (292 aa).

Disordered stretches follow at residues 27–68 (RSFG…NTTS) and 266–292 (TGFH…VFDS). Residues 55 to 68 (TNRPPNQHVPNTTS) are compositionally biased toward polar residues.

It belongs to the SDHAF2 family. As to quaternary structure, interacts with the flavoprotein subunit within the SDH catalytic dimer.

The protein resides in the mitochondrion matrix. Plays an essential role in the assembly of succinate dehydrogenase (SDH), an enzyme complex (also referred to as respiratory complex II) that is a component of both the tricarboxylic acid (TCA) cycle and the mitochondrial electron transport chain, and which couples the oxidation of succinate to fumarate with the reduction of ubiquinone (coenzyme Q) to ubiquinol. Required for flavinylation (covalent attachment of FAD) of the flavoprotein subunit of the SDH catalytic dimer. The protein is Succinate dehydrogenase assembly factor 2, mitochondrial of Aspergillus flavus (strain ATCC 200026 / FGSC A1120 / IAM 13836 / NRRL 3357 / JCM 12722 / SRRC 167).